The following is a 680-amino-acid chain: MASTVGLAPGLSRKLKKVLDCRTDSPDLVASLNALSSFYDENSAHARRNLRSTIEKRALQINSEFLNAADSTQIALDRVEEEVNALADCCDKIAAALSSSAATTSDIISTTERLKQELEVTTQRQEIVNCFLRDYQLSNEEIKALREDELNENFFQALSHVQEIHSNCKLLLRTHHQRAGLELMDMMAVYQEGAYERLCRWVQAECRKLGDTDNPEVSELLRTAVRCLKERPVLFKYCAEEVGNLRHNALFRRFISALTRGGPGGMPRPIEVHAHDPLRYVGDMLGWLHQALASERELVHALFDIDSADHQSNAKNTSENIALKAGESDFTFVLDRIFEGVCRPFKVRVEQVLQSQPSLIISYKLTNTLEFYSYTISDLLGRDTALCNTIGMVKDAAQKTFFDILKTRGEKLLRYPPPVAVDLSPPPAVREGVSLTLEIIENYNSMMVSASGEKPAFDPVLSALLDPIIKMCEQAAEAHKSKKSGQLPRRSRTSSDSSQLTSVDALLSSSPSPPQNNETPSKIFLINCLCAIQQPLLRHDVASQYVTNIGLMIENHINLLVQNEVDTLLHKCGLSDKMQIFRSSTSELPLSERQDTSPAMLSECLKAFFGLVLGSEGSLPEFEQIQVPKLRSEACVRVAKTLAEAYEVIYQAVTDQQNGYPDPKSLARHPPDQIRTILGI.

The tract at residues 479–517 is disordered; that stretch reads HKSKKSGQLPRRSRTSSDSSQLTSVDALLSSSPSPPQNN.

It belongs to the COG6 family. As to quaternary structure, component of the conserved oligomeric Golgi complex which is composed of eight different subunits and is required for normal Golgi morphology and localization. Interacts with COG5, COG7 and COG8.

The protein resides in the golgi apparatus membrane. Required for normal Golgi function. The sequence is that of Conserved oligomeric Golgi complex subunit 6 from Arabidopsis thaliana (Mouse-ear cress).